A 117-amino-acid chain; its full sequence is MDKKVARIRRASRARHLMREQGATRLVVHRTPRHIYAQVIAPNGSEVLAAASTVEKVIKEQVQYTGNKDAAAIVGKLVAERALAKGIQVVAFDRSGFKYHGRVQVLADAAREAGLQF.

Belongs to the universal ribosomal protein uL18 family. As to quaternary structure, part of the 50S ribosomal subunit; part of the 5S rRNA/L5/L18/L25 subcomplex. Contacts the 5S and 23S rRNAs.

This is one of the proteins that bind and probably mediate the attachment of the 5S RNA into the large ribosomal subunit, where it forms part of the central protuberance. This Haemophilus ducreyi (strain 35000HP / ATCC 700724) protein is Large ribosomal subunit protein uL18.